Consider the following 153-residue polypeptide: Transcriptional repressor NrdR (153 aa).

A zinc finger lies at Cys3 to Cys34. In terms of domain architecture, ATP-cone spans Leu46–Asp136.

It belongs to the NrdR family. Zn(2+) serves as cofactor.

Its function is as follows. Negatively regulates transcription of bacterial ribonucleotide reductase nrd genes and operons by binding to NrdR-boxes. This Thermobifida fusca (strain YX) protein is Transcriptional repressor NrdR.